Reading from the N-terminus, the 437-residue chain is Mitochondrial distribution and morphology protein 12 (437 aa).

Residues 1–437 (MSIDINWRTA…VYPSFWTFLI (437 aa)) form the SMP-LTD domain. Residues 73-85 (DDDADTSDVSEDL) show a composition bias toward acidic residues. Disordered regions lie at residues 73–101 (DDDA…SELN), 187–274 (SDSG…PPRM), and 354–384 (SEQQ…RQGG). Over residues 91–101 (SQWDRTHSELN) the composition is skewed to basic and acidic residues. 2 stretches are compositionally biased toward polar residues: residues 215–240 (DTSN…NNLN) and 371–381 (ADSSAHTSQKR).

This sequence belongs to the MDM12 family. As to quaternary structure, component of the ER-mitochondria encounter structure (ERMES) or MDM complex, composed of mmm1, mdm10, mdm12 and mdm34. A mmm1 homodimer associates with one molecule of mdm12 on each side in a pairwise head-to-tail manner, and the SMP-LTD domains of mmm1 and mdm12 generate a continuous hydrophobic tunnel for phospholipid trafficking.

The protein resides in the mitochondrion outer membrane. Its subcellular location is the endoplasmic reticulum membrane. Its function is as follows. Component of the ERMES/MDM complex, which serves as a molecular tether to connect the endoplasmic reticulum (ER) and mitochondria. Components of this complex are involved in the control of mitochondrial shape and protein biogenesis, and function in nonvesicular lipid trafficking between the ER and mitochondria. Mdm12 is required for the interaction of the ER-resident membrane protein mmm1 and the outer mitochondrial membrane-resident beta-barrel protein mdm10. The mdm12-mmm1 subcomplex functions in the major beta-barrel assembly pathway that is responsible for biogenesis of all mitochondrial outer membrane beta-barrel proteins, and acts in a late step after the SAM complex. The mdm10-mdm12-mmm1 subcomplex further acts in the TOM40-specific pathway after the action of the mdm12-mmm1 complex. Essential for establishing and maintaining the structure of mitochondria and maintenance of mtDNA nucleoids. This is Mitochondrial distribution and morphology protein 12 from Aspergillus clavatus (strain ATCC 1007 / CBS 513.65 / DSM 816 / NCTC 3887 / NRRL 1 / QM 1276 / 107).